A 491-amino-acid chain; its full sequence is MGAYLNKPIIEKEKEEGSGNGLSYACTTMQGWRVNQEDAHNCVVDLHTDWHMFGVYDGHGGTEVSKFTSAKLPDFLKERKFWEADDVAECLQKAFVDFDDFIRAEESMKELKDIGDEGKPKKAGGEADSEDEADRIDTIEEASVPLAELLKRYGGAGVGKSLLSAFLAKGDVSDDSEDEDEDEEEAEEQDDTEEKKENEDASAEVVIENAEDKEEEEGSPKKKGQKRCQKSPIQSEAKKSKSETDAETAPSSSSGVDGVATEEEDEDDSDKEFVADEEEDDEDAEDEQSDEEMVDGSLAPLLLGSGGAEVPGEDSGTTACVCLVGKDKVIVANAGDSRAVLCRNGKAVDLSVDHKPEDEVETNRIHAAGGQIEDGRVNGGLNLSRAFGDHAYKKNQELGLKEQMITALPDVKIEALTPEDEFIVVACDGIWNSMESQQVVDFVRDLLAKGSSCAEVCDALCDACLADSTDGDGTGCDNMTVICTTFDRKSK.

Residues 23 to 486 (SYACTTMQGW…DNMTVICTTF (464 aa)) form the PPM-type phosphatase domain. Mn(2+)-binding residues include Asp-57 and Gly-58. The span at 112-125 (KDIGDEGKPKKAGG) shows a compositional bias: basic and acidic residues. Disordered stretches follow at residues 112 to 136 (KDIG…ADRI) and 170 to 294 (GDVS…EEMV). Acidic residues-rich tracts occupy residues 173–192 (SDDS…QDDT) and 260–294 (ATEE…EEMV). 2 residues coordinate Mn(2+): Asp-428 and Asp-477.

The protein belongs to the PP2C family. The cofactor is Mg(2+). It depends on Mn(2+) as a cofactor.

The enzyme catalyses O-phospho-L-seryl-[protein] + H2O = L-seryl-[protein] + phosphate. The catalysed reaction is O-phospho-L-threonyl-[protein] + H2O = L-threonyl-[protein] + phosphate. In Caenorhabditis elegans, this protein is Protein phosphatase ppm-1.G.